The sequence spans 832 residues: MSEIHVKTALSRLADKYLQNSKNPSVPYTIETIVSFFQEIIHSISPDTFQLDIDDILYKIYSKIPPEENNDALFSKLSNLVSRLKSQTVIHNKSQILYFLYLLSPISQSSRDVSSHLLDESISNPINIPSTEVESSNFGQTRYDQVPENPQITDWDEGLENESSISIAHDSSRLNRSTETSSVQHTLITEADLLSSISYVLQGISTEYVQFKNELALLSKRIPVQYLLQMRALSETGLLYQELKVFSNYDPSVSQSIDGDNVSKAFINDQSLALQSLKSVISKELTNFLALIASLDSQIRADASLEKPMVTIRRCIAWTQVAKLKLRILSSVVNDNMNQENKKRLIQVVSKYNVHGDPLIQELSDKILTEITGPLYEMIENWIYKGELVDPYQEFFVKEKNGSESHDHQGQGDVVWKGKYFLDKELIPSFLSEELVDKIFLIGKSLNFARYGCGDFDWAQEHYQKLVKKLSYRDPHSLETVVDKAYTESINHLVYLMEEVFHLTDHLKAIKKYLLLGQGDFVDLLMESLGNSLDQPANTLFRHNLTASLESAIRSSNASYEPEYVLKRLDARLLELSHGETGWDVFTLEYKVDSPINVIITPYCSRQYLKIFNFLWRLKRIEFALAHSWRRVNLGERNVFRNLDYTKFEWHFVSCHLAEMIHFVCQLQYYILFEVIEISWQELQLAMEKPNATLDTYIEAHEKYVTSITHKGLLGGGKSRNEDSFLHQLHDILKVILNFHDAIELLYNFSCSLSNRIRINVPISTDALAAQYTPIKNELSNFTEEFQVRLQKLLHGLASHKDPEMRFLSVRLNYNEFYVSHRRRHDKDVTSQ.

Residues 1–186 are interaction with mzt1; that stretch reads MSEIHVKTAL…STETSSVQHT (186 aa). A Phosphothreonine modification is found at T286.

This sequence belongs to the TUBGCP family. Part of the gamma-tubulin complex. Interacts directly with mzt1. Interacts with mto1. Interacts with mto2.

The protein localises to the cytoplasm. It is found in the cytoskeleton. It localises to the microtubule organizing center. The protein resides in the spindle pole body. In terms of biological role, component of the gamma tubule complex that is required for the regulation of both interphase microtubules and mitotic bipolar spindles. The sequence is that of Spindle pole body component alp6 (alp6) from Schizosaccharomyces pombe (strain 972 / ATCC 24843) (Fission yeast).